Consider the following 92-residue polypeptide: Alpha-conotoxin VxXXA (92 aa).

A signal peptide spans 1-24 (MPKLEMMLLVLLIFPLSYFIAAGG). Positions 25 to 45 (QVVQVDRRGDGLAGYLQRGDR) are excised as a propeptide. 3 positions are modified to 4-hydroxyproline; partial: Pro-55, Pro-70, and Pro-74. 4 disulfide bridges follow: Cys-63–Cys-72, Cys-68–Cys-80, Cys-73–Cys-90, and Cys-78–Cys-92.

Belongs to the conotoxin D superfamily. As to quaternary structure, homodimer or pseudo-homodimer. Three dimers exist: homodimer of VxXXA, pseudo-homodimer of both VxXXA and [hydroxyPro-74]VxXXA and homodimer of [hydroxyPro-74]VxXXA. These three components exist in a 1:2:1 ratio. VxXXA stands for the form with the Pro-55 hydroxylated. A second major form has both Pro-55 and Pro-74 hydroxylated. The two major forms VxXXA and [hydroxyPro-74]VxXXA exist in a 1:1 ratio. In terms of processing, minor forms are [hydroxyPro-70,hydroxyPro-74]VxXXA and [Pro-55]VxXXA. In terms of tissue distribution, expressed by the venom duct.

It localises to the secreted. Alpha-conotoxins act on postsynaptic membranes, they bind to the nicotinic acetylcholine receptors (nAChR) and thus inhibit them. Through its two C-terminal domains, this homodimeric protein would bind to two nAChR allosteric sites, located outside the nAChR C-loop of the principal binding face and at the adjacent binding interface in a clockwise direction. This toxin specifically blocks mammalian neuronal nAChR of the alpha-7/CHRNA7, alpha-3-beta-2/CHRNA3-CHRNB2 (IC(50)=370 nM) and alpha-4-beta-2/CHRNA4-CHRNB2 subtypes. VxXXB inhibits alpha-7/CHRNA7 and alpha-3-beta-2/CHRNA3-CHRNB2 nAChR subtypes with the highest efficiency, followed by VxXXA and VxXXC. VxXXB and VxXXC inhibit the alpha-4-beta-2/CHRNA4-CHRNB2 nAChR subtype more efficiently than VxXXA. The chain is Alpha-conotoxin VxXXA from Conus vexillum (Flag cone).